The sequence spans 412 residues: Proteasome-activating nucleotidase (412 aa).

Residues 15–73 adopt a coiled-coil conformation; the sequence is EDIYQYLLERITNLENRNLELREQFRQMESEKRYVETQKIRYERELRKLKSEIEQLRSP. ATP-binding positions include 197–202 and His336; that span reads GTGKTL. Residues 410-412 are docks into pockets in the proteasome alpha-ring to cause gate opening; the sequence is MFA.

It belongs to the AAA ATPase family. Homohexamer. The hexameric complex has a two-ring architecture resembling a top hat that caps the 20S proteasome core at one or both ends. Upon ATP-binding, the C-terminus of PAN interacts with the alpha-rings of the proteasome core by binding to the intersubunit pockets.

It is found in the cytoplasm. Functionally, ATPase which is responsible for recognizing, binding, unfolding and translocation of substrate proteins into the archaeal 20S proteasome core particle. Is essential for opening the gate of the 20S proteasome via an interaction with its C-terminus, thereby allowing substrate entry and access to the site of proteolysis. Thus, the C-termini of the proteasomal ATPase function like a 'key in a lock' to induce gate opening and therefore regulate proteolysis. Unfolding activity requires energy from ATP hydrolysis, whereas ATP binding alone promotes ATPase-20S proteasome association which triggers gate opening, and supports translocation of unfolded substrates. This chain is Proteasome-activating nucleotidase, found in Methanoculleus marisnigri (strain ATCC 35101 / DSM 1498 / JR1).